The chain runs to 400 residues: MKNYHAPDEKGFFGEHGGLYVSETLIPALQELADAYKAAKNDPEFWEAFRHDLKHYVGRPSPVYHAARLSEHLGGAQIWLKREDLNHTGAHKVNNTIGQALLAKRMGKKRVIAETGAGQHGVASATVAARFGMTCDVYMGADDIQRQMPNVFRMKLLGANVVGVESGSRTLKDAMNEAMREWVARVDDTFYIIGTAAGPAPYPEMVRDFQCVIGNEAKAQMQEAIGRQPDVAVACVGGGSNAIGLFHPYIGEENVRLVGVEAGGLGVNTPDHAAPITSGAPIGVLHGFRSYLMQDENGQVLGTHSVSAGLDYPGIGPEHSHLHDIKRVEYTVAKDDEALEAFDLLCRFEGIIPALESSHAVAWAVKNAPKMGKDQVILVNLSGRGDKDINTVAKLKGIKL.

Residue lysine 92 is modified to N6-(pyridoxal phosphate)lysine.

This sequence belongs to the TrpB family. In terms of assembly, tetramer of two alpha and two beta chains. Pyridoxal 5'-phosphate serves as cofactor.

It catalyses the reaction (1S,2R)-1-C-(indol-3-yl)glycerol 3-phosphate + L-serine = D-glyceraldehyde 3-phosphate + L-tryptophan + H2O. The protein operates within amino-acid biosynthesis; L-tryptophan biosynthesis; L-tryptophan from chorismate: step 5/5. The beta subunit is responsible for the synthesis of L-tryptophan from indole and L-serine. The protein is Tryptophan synthase beta chain of Neisseria meningitidis serogroup B (strain ATCC BAA-335 / MC58).